A 431-amino-acid chain; its full sequence is 5-methylthioadenosine/S-adenosylhomocysteine deaminase (431 aa).

Histidine 60 and histidine 62 together coordinate Zn(2+). Substrate is bound by residues glutamate 89 and histidine 182. Histidine 209 contributes to the Zn(2+) binding site. The substrate site is built by glutamate 212 and aspartate 297. Aspartate 297 contributes to the Zn(2+) binding site.

The protein belongs to the metallo-dependent hydrolases superfamily. MTA/SAH deaminase family. It depends on Zn(2+) as a cofactor.

It carries out the reaction S-adenosyl-L-homocysteine + H2O + H(+) = S-inosyl-L-homocysteine + NH4(+). The enzyme catalyses S-methyl-5'-thioadenosine + H2O + H(+) = S-methyl-5'-thioinosine + NH4(+). In terms of biological role, catalyzes the deamination of 5-methylthioadenosine and S-adenosyl-L-homocysteine into 5-methylthioinosine and S-inosyl-L-homocysteine, respectively. Is also able to deaminate adenosine. This chain is 5-methylthioadenosine/S-adenosylhomocysteine deaminase, found in Natronomonas pharaonis (strain ATCC 35678 / DSM 2160 / CIP 103997 / JCM 8858 / NBRC 14720 / NCIMB 2260 / Gabara) (Halobacterium pharaonis).